We begin with the raw amino-acid sequence, 706 residues long: Cyclic nucleotide-gated ion channel 18 (706 aa).

Residues 1-53 (MNKIRSLRCLLPETITSASTAASNRGSDGSQFSVLWRHQILDPDSNIVTYWNH) lie on the Cytoplasmic side of the membrane. A helical transmembrane segment spans residues 54 to 74 (VFLITSILALFLDPFYFYVPY). Residues 75–86 (VGGPACLSIDIS) are Extracellular-facing. Residues 87–107 (LAATVTFFRTVADIFHLLHIF) traverse the membrane as a helical segment. The Cytoplasmic segment spans residues 108 to 142 (MKFRTAFVARSSRVFGRGELVMDSREIAMRYLKTD). A helical transmembrane segment spans residues 143–163 (FLIDVAAMLPLPQLVIWLVIP). Residues 164-174 (AATNGTANHAN) are Extracellular-facing. Residues 175–195 (STLALIVLVQYIPRSFIIFPL) form a helical membrane-spanning segment. Topologically, residues 196 to 217 (NQRIIKTTGFIAKTAWAGAAYN) are cytoplasmic. A helical membrane pass occupies residues 218–238 (LLLYILASHVLGAMWYLSSIG). The Extracellular portion of the chain corresponds to 239-345 (RQFSCWSNVC…ITTSVYLGET (107 aa)). A helical membrane pass occupies residues 346-366 (LFCITICIFGLILFTLLIGNM). The Cytoplasmic segment spans residues 367–706 (QSSLQSMSVR…PDFSIDKEDV (340 aa)). Residues 449 to 579 (FFSQ…AFRY) and glutamate 520 each bind a nucleoside 3',5'-cyclic phosphate. Positions 565–580 (FKRLQSKKLQHAFRYY) are calmodulin-binding. One can recognise an IQ domain in the interval 585–614 (RAWGACFVQSAWRRYKRRKLAKELSLHESS). The tract at residues 661 to 706 (ANTRRGTNQKASSSSTGKKDGSSTSLKMPQLFKPDEPDFSIDKEDV) is disordered. The span at 693–706 (KPDEPDFSIDKEDV) shows a compositional bias: basic and acidic residues.

The protein belongs to the cyclic nucleotide-gated cation channel (TC 1.A.1.5) family. As to quaternary structure, homomultimer. Interacts with CPK32. In terms of tissue distribution, expressed in pollen grains. Not detected in leaves, roots or root hairs.

The protein resides in the cell membrane. It is found in the cytoplasmic vesicle membrane. Functionally, cyclic nucleotide-gated ion channel required for directional pollen tube growth into the transmitting tract. Acts as a Ca(2+)-permeable divalent cation-selective channel inhibited by either lanthanum or gadolinium. Regulated by CPK32 to mediate Ca(2+) transport across the plasma membrane in response to Ca(2+) oscillation. The chain is Cyclic nucleotide-gated ion channel 18 from Arabidopsis thaliana (Mouse-ear cress).